Consider the following 352-residue polypeptide: Ion-translocating oxidoreductase complex subunit D (352 aa).

5 helical membrane passes run 20–40 (IMLLVLLAAVPGIAAQLWFFG), 42–62 (GTLVQILLASVSALLAEALVL), 78–109 (ALLTGLLLAVSIPPLAPWWMVVLGTVFAVIIA), 123–143 (PAMIGYVVLLISFPVQMTSWL), and 148–168 (IAVNIPGFIDAIQVIFSGHIT). Thr-187 carries the FMN phosphoryl threonine modification. 5 consecutive transmembrane segments (helical) span residues 215–235 (LAGVGWQWVNLAWLAGGVWLL), 242–262 (WHIPLSFLVTLALCATLGWLF), 267–287 (LAAPQIHLLSGATMLGAFFIL), 301–321 (LIFGALAGLLVWLIRSFGGYP), and 322–342 (DGVAFAVLLANITVPLIDYYT).

The protein belongs to the NqrB/RnfD family. The complex is composed of six subunits: RsxA, RsxB, RsxC, RsxD, RsxE and RsxG. It depends on FMN as a cofactor.

The protein resides in the cell inner membrane. Functionally, part of a membrane-bound complex that couples electron transfer with translocation of ions across the membrane. Required to maintain the reduced state of SoxR. This Escherichia coli (strain SMS-3-5 / SECEC) protein is Ion-translocating oxidoreductase complex subunit D.